The primary structure comprises 718 residues: Receptor-like protein 36 (718 aa).

The signal sequence occupies residues 1–26 (MIRSLSYCFLTIYFFLSILPLPNTIA). Residues 27 to 695 (CPTRLLCRSD…SESEDQLLNW (669 aa)) lie on the Extracellular side of the membrane. LRR repeat units follow at residues 70 to 94 (DAILGELVLSRCKLQGEIPSSIGNL), 95 to 118 (SHLTYLDLSNNQLVGEVPASIGNL), 120 to 141 (QLESMRLWDNDLKGNIPTSFAN), 143 to 165 (TKLSELYLFGNQFTGGDTVLANL), 166 to 188 (TSLSIIDLSLNYFKSSISADLSG), 189 to 213 (LHNLERFSVYNNSFSGPFPLSLLMI), 214 to 238 (PSLVHIDLSQNHFEGPIDFRNTFSL), 239 to 261 (SRLRVLYVGFNNLDGLIPESISK), 262 to 286 (LVNLEYLDVSHNNFGGQVPRSISKV), 288 to 310 (NLTSVDLSYNKLEGQVPDFVWRS), 312 to 334 (KLDYVDLSYNSFNCFAKSVEVID), 335 to 359 (GASLTMLNLGSNSVDGPFPKWICKV), 360 to 383 (KDLYALDLSNNHFNGSIPQCLKYS), 384 to 406 (TYFHTLNLRNNSLSGVLPNLFIK), 407 to 431 (DSQLRSLDVSSNNLVGKLPKSLINC), 433 to 454 (RIEFLNVKGNKIMDTFPFWLGS), 455 to 480 (LPYLKVLMLGSNAFYGPVYNPSAYLG), and 481 to 505 (FPSIRIIDISNNNFVGSLPQDYFAN). The N-linked (GlcNAc...) asparagine glycan is linked to asparagine 93. Asparagine 141 and asparagine 164 each carry an N-linked (GlcNAc...) asparagine glycan. A glycan (N-linked (GlcNAc...) asparagine) is linked at asparagine 199. Asparagine 288 is a glycosylation site (N-linked (GlcNAc...) asparagine). N-linked (GlcNAc...) asparagine glycosylation is found at asparagine 373 and asparagine 393. Asparagine 528 is a glycosylation site (N-linked (GlcNAc...) asparagine). LRR repeat units follow at residues 550-574 (FEGFNAIDFSGNRFSGHIPGSIGLL), 575-598 (SELRLLNLSGNAFTGNIPPSLANI), 599-622 (TNLESLDLSRNNLSGEIPISLGKL), and 624-647 (FLSNTNFSYNHLEGLIPQSTQFAT). Residues asparagine 581, asparagine 597, asparagine 610, asparagine 629, and asparagine 649 are each glycosylated (N-linked (GlcNAc...) asparagine). The chain crosses the membrane as a helical span at residues 696 to 716 (IAAAIAFGPGMFCGLVIGHIF). The Cytoplasmic portion of the chain corresponds to 717–718 (TS).

The protein belongs to the RLP family.

It is found in the cell membrane. This is Receptor-like protein 36 from Arabidopsis thaliana (Mouse-ear cress).